A 481-amino-acid polypeptide reads, in one-letter code: MSGQADIALIGLAVMGQNLILNMDEKGFVVCAYNRTVAKVKEFLANEAKGTNVIGADSLKDMVSKLKSPRKVMLLVKGGSAVDDFIQQLVPLLSAGDVIIDGGNSEYQDTSRRCDELAKLGLLYVGSGVSGGEEGARHGPSLMPGGHEAAWPLIQPIFQAICAKADGEPCCEWVGDGGAGHFVKMVHNGIEYGDMQLICEAYHIMQSLGLSADQMADEFGKWNSAELDSFLIEITRDILKYKDGKGHLLERIRDTAGQKGTGKWTAIAALQYGVPVTLIGEAVFSRCLSALKDERVQASSVLKGPSTKAEVANLTKFLDDIKHALYCAKIVSYAQGFMLMREAARENKWRLNYGGIALMWRGGCIIRSVFLGNIKDAYTSQPQLSNLLLDDFFKKAIERGQDSWREVVANAFRWGIPVPALSTALSFYDGYRTAKLPANLLQAQRDYFGAHTYELLGQEGQFHHTNWTGTGGNVSASTYQA.

NADP(+) contacts are provided by residues 11–16, 34–36, 76–78, and Asn104; these read GLAVMG, NRT, and VKG. Residues Asn104 and 130-132 contribute to the substrate site; that span reads SGG. Lys184 serves as the catalytic Proton acceptor. 187–188 contributes to the substrate binding site; sequence HN. Catalysis depends on Glu191, which acts as the Proton donor. Residues Tyr192, Lys259, Arg286, Arg445, and His451 each contribute to the substrate site.

This sequence belongs to the 6-phosphogluconate dehydrogenase family. In terms of assembly, homodimer.

It carries out the reaction 6-phospho-D-gluconate + NADP(+) = D-ribulose 5-phosphate + CO2 + NADPH. It functions in the pathway carbohydrate degradation; pentose phosphate pathway; D-ribulose 5-phosphate from D-glucose 6-phosphate (oxidative stage): step 3/3. Functionally, catalyzes the oxidative decarboxylation of 6-phosphogluconate to ribulose 5-phosphate and CO(2), with concomitant reduction of NADP to NADPH. The chain is 6-phosphogluconate dehydrogenase, decarboxylating (Pgd) from Drosophila simulans (Fruit fly).